Consider the following 787-residue polypeptide: MGRKLYYVLATLQLVAVFLFCGGFFPQKVVLKNDSKFIVNPEVQLASKPVFKKLVLVVIDALRSDFLFQKDSSDFEFLHGLLNSGEAWGYTAYSNPPTVTLPRLKGITTGSAPNFLDAILNVAEDDTSSNLKEQDSLLKQFHTHHYKMNFFGDDTWLKLFPLEFFSEYDGTNSFFVSDFEEVDFNVTRHVPYQMEHQKNWDVLILHYLGLDHIGHKGGSKSHFMPSKHREMDSVIKQIYEKIDGDTLMVVLGDHGMNDLGNHGGSSSGETSAALAFLSKRLKKYQSSDIQQSSNVPVEDAHPDYKYLKEVEQIDIVPTLSMLFNLPIPKNSMGVIIDELLQLLPSKLAAIKVQDNYLQLTKLKPGYEAQLEKKSAGTLLEEMREIQSSLAMAATNYNYTFLTYGTTLMIIGTLIVTVWNFQLSQEYIEHVGTSVLLGISMFASSFIEEEHQIWWWITISVLLLMQISNGKKLVVLSGLRLIRGWNNSGQKYIYDNVLHTLLKSHTSVLWWLNVVTFLSVGFPFLRNKDESEKMVSLLSVSFLALSSITYKICFAIVNGDKVPSGLYTFALRSCAMYLANENATESDISQCLVPIARIFFQICGVSIIILLFMKYALNKSTNMLNKLLSVIKFVLLLQTSSANIPLFLIFEILTSVTPDITPIFSLCLQNLTFFQFGGTNSIATVNLTNAYNGVSSNYNIYVVGVLMFLSNYAPSIYWALSLIPQSYKQKTLRLQHYYITGTCLMIACIALRYHLFIWSVFSPKLCYYAAWSLYNVVMDFAITLLGVL.

3 N-linked (GlcNAc...) asparagine glycosylation sites follow: N33, N185, and N397. Transmembrane regions (helical) follow at residues 400-420 (FLTY…VWNF), 426-446 (YIEH…SSFI), and 455-475 (WITI…LVVL). The N-linked (GlcNAc...) asparagine glycan is linked to N485. 2 helical membrane passes run 504–524 (HTSV…FPFL) and 536–556 (LLSV…FAIV). An N-linked (GlcNAc...) asparagine glycan is attached at N581. A helical transmembrane segment spans residues 591 to 611 (LVPIARIFFQICGVSIIILLF). N617 carries N-linked (GlcNAc...) asparagine glycosylation. Residues 629–651 (VIKFVLLLQTSSANIPLFLIFEI) form a helical membrane-spanning segment. An N-linked (GlcNAc...) asparagine glycan is attached at N669. Transmembrane regions (helical) follow at residues 671–693 (TFFQ…YNGV), 699–719 (IYVV…YWAL), 740–760 (GTCL…WSVF), and 767–787 (YAAW…LGVL).

Belongs to the PIGG/PIGN/PIGO family. PIGG subfamily.

Its subcellular location is the endoplasmic reticulum membrane. It functions in the pathway glycolipid biosynthesis; glycosylphosphatidylinositol-anchor biosynthesis. Functionally, ethanolamine phosphate transferase involved in glycosylphosphatidylinositol-anchor biosynthesis. Transfers ethanolamine phosphate to the GPI second mannose. The protein is GPI ethanolamine phosphate transferase 2 (LAS21) of Kluyveromyces lactis (strain ATCC 8585 / CBS 2359 / DSM 70799 / NBRC 1267 / NRRL Y-1140 / WM37) (Yeast).